Reading from the N-terminus, the 229-residue chain is tRNA (guanine-N(7)-)-methyltransferase (229 aa).

4 residues coordinate S-adenosyl-L-methionine: Glu62, Glu87, Asp114, and Asp137. Asp137 is an active-site residue. Lys141 contributes to the substrate binding site. The interval 143-148 is interaction with RNA; that stretch reads KHNKRR. Residues Asp173 and 208–211 contribute to the substrate site; that span reads TKFE.

Belongs to the class I-like SAM-binding methyltransferase superfamily. TrmB family.

The catalysed reaction is guanosine(46) in tRNA + S-adenosyl-L-methionine = N(7)-methylguanosine(46) in tRNA + S-adenosyl-L-homocysteine. It functions in the pathway tRNA modification; N(7)-methylguanine-tRNA biosynthesis. Its function is as follows. Catalyzes the formation of N(7)-methylguanine at position 46 (m7G46) in tRNA. The protein is tRNA (guanine-N(7)-)-methyltransferase of Francisella philomiragia subsp. philomiragia (strain ATCC 25017 / CCUG 19701 / FSC 153 / O#319-036).